We begin with the raw amino-acid sequence, 89 residues long: YcgL domain-containing protein Asuc_1390 (89 aa).

In terms of domain architecture, YcgL spans 1–85 (MLCAIYKSKK…KDDWLFTIEK (85 aa)).

The sequence is that of YcgL domain-containing protein Asuc_1390 from Actinobacillus succinogenes (strain ATCC 55618 / DSM 22257 / CCUG 43843 / 130Z).